A 382-amino-acid polypeptide reads, in one-letter code: D-galactonate dehydratase (382 aa).

Aspartate 183 contacts Mg(2+). Histidine 185 acts as the Proton donor in catalysis. Mg(2+) contacts are provided by glutamate 209 and glutamate 235. Residue histidine 285 is the Proton acceptor of the active site.

It belongs to the mandelate racemase/muconate lactonizing enzyme family. GalD subfamily. Mg(2+) is required as a cofactor.

The enzyme catalyses D-galactonate = 2-dehydro-3-deoxy-D-galactonate + H2O. It participates in carbohydrate acid metabolism; D-galactonate degradation; D-glyceraldehyde 3-phosphate and pyruvate from D-galactonate: step 1/3. Its function is as follows. Catalyzes the dehydration of D-galactonate to 2-keto-3-deoxy-D-galactonate. The protein is D-galactonate dehydratase of Pectobacterium atrosepticum (strain SCRI 1043 / ATCC BAA-672) (Erwinia carotovora subsp. atroseptica).